The following is a 65-amino-acid chain: Cold shock-like protein CspC (65 aa).

The region spanning 3–62 (GRVKWFNAEKGFGFIEREDGDDVFVHFSAIQQDGYKSLEEGQQVEFDIVDGARGPQAANV) is the CSD domain.

Homodimer.

It localises to the cytoplasm. The protein is Cold shock-like protein CspC (cspC) of Bacillus cereus.